Reading from the N-terminus, the 106-residue chain is UPF0145 protein NE1032 (106 aa).

It belongs to the UPF0145 family.

The chain is UPF0145 protein NE1032 from Nitrosomonas europaea (strain ATCC 19718 / CIP 103999 / KCTC 2705 / NBRC 14298).